The chain runs to 356 residues: tRNA N6-adenosine threonylcarbamoyltransferase (356 aa).

2 residues coordinate Fe cation: histidine 115 and histidine 119. Residues 138-142 (LVSGG), aspartate 171, glycine 184, and asparagine 283 contribute to the substrate site. Aspartate 311 contributes to the Fe cation binding site.

This sequence belongs to the KAE1 / TsaD family. It depends on Fe(2+) as a cofactor.

Its subcellular location is the cytoplasm. It carries out the reaction L-threonylcarbamoyladenylate + adenosine(37) in tRNA = N(6)-L-threonylcarbamoyladenosine(37) in tRNA + AMP + H(+). Its function is as follows. Required for the formation of a threonylcarbamoyl group on adenosine at position 37 (t(6)A37) in tRNAs that read codons beginning with adenine. Is involved in the transfer of the threonylcarbamoyl moiety of threonylcarbamoyl-AMP (TC-AMP) to the N6 group of A37, together with TsaE and TsaB. TsaD likely plays a direct catalytic role in this reaction. The polypeptide is tRNA N6-adenosine threonylcarbamoyltransferase (Prochlorococcus marinus (strain MIT 9301)).